Consider the following 1184-residue polypeptide: DNA-directed RNA polymerase subunit beta (1184 aa).

The tract at residues 1160–1184 (DDDFTNQNDAFNIVQPENAAAEKTE) is disordered.

This sequence belongs to the RNA polymerase beta chain family. The RNAP catalytic core consists of 2 alpha, 1 beta, 1 beta' and 1 omega subunit. When a sigma factor is associated with the core the holoenzyme is formed, which can initiate transcription.

It catalyses the reaction RNA(n) + a ribonucleoside 5'-triphosphate = RNA(n+1) + diphosphate. Functionally, DNA-dependent RNA polymerase catalyzes the transcription of DNA into RNA using the four ribonucleoside triphosphates as substrates. This is DNA-directed RNA polymerase subunit beta from Listeria monocytogenes serotype 4b (strain F2365).